Reading from the N-terminus, the 237-residue chain is rRNA-processing protein EFG1 (237 aa).

The segment at 1–24 (MPKTVKNPKNNKSRSRGAPIQVAE) is disordered. Coiled coils occupy residues 53–113 (DKKI…ISQT) and 166–186 (LKIT…LMEE). Residues 206–237 (NDKTQKAVLTEEIDAPEQKQDEQQEEQDDFFE) are disordered. Acidic residues predominate over residues 228–237 (QQEEQDDFFE).

It belongs to the EFG1 family.

Its subcellular location is the nucleus. The protein localises to the nucleolus. Its function is as follows. Involved in rRNA processing. The protein is rRNA-processing protein EFG1 of Candida albicans (strain SC5314 / ATCC MYA-2876) (Yeast).